A 264-amino-acid polypeptide reads, in one-letter code: MTMEILLVNDDGIYSNGLLALKNVIGEEFDANVTVVAPTNQQSGIGRAISLFEPLRITKTKLADCSEGYAVSGTPTDCVVLGIHQVLKKVPDYVISGINIGENLGTEITTSGTLGAAFEGAHHGAKALACSLQVTMDHLKFKEGESPIEFLTTARIVKNVFKKFLGDEFPCDVVNINVPDNATENTPVEITKLAKRMYSMHVEERIDPRSRSYYWLDGYPVMDEEDGTDVYAVRNKRNVSVTPLTLDNTAKNLDEFKEKYAKKF.

Aspartate 10, aspartate 11, serine 43, and asparagine 99 together coordinate a divalent metal cation.

The protein belongs to the SurE nucleotidase family. A divalent metal cation serves as cofactor.

The protein resides in the cytoplasm. The catalysed reaction is a ribonucleoside 5'-phosphate + H2O = a ribonucleoside + phosphate. Functionally, nucleotidase that shows phosphatase activity on nucleoside 5'-monophosphates. The polypeptide is 5'-nucleotidase SurE (Methanococcus maripaludis (strain C7 / ATCC BAA-1331)).